A 113-amino-acid polypeptide reads, in one-letter code: Ig kappa chain V-II region 17S29.1 (113 aa).

The framework-1 stretch occupies residues 1–23 (DIVMTQAVFSNPVTLGTSASISC). Residues cysteine 23 and cysteine 93 are joined by a disulfide bond. The complementarity-determining-1 stretch occupies residues 24–39 (RSSKSLLHSNGITYLY). The framework-2 stretch occupies residues 40 to 54 (WYLQKPGQSPQLLLY). A complementarity-determining-2 region spans residues 55-61 (QMSNLAS). The tract at residues 62–93 (GVPDRFSSSGSGTDFTLRISRVEAEDVGVYYC) is framework-3. The interval 94 to 102 (AHNLELPYT) is complementarity-determining-3. The segment at 103-112 (FGGGTKLEIK) is framework-4.

In terms of biological role, anti-streptococcal group A carbohydrate antibody. This Mus musculus (Mouse) protein is Ig kappa chain V-II region 17S29.1.